The following is a 105-amino-acid chain: Large ribosomal subunit protein uL24 (105 aa).

The protein belongs to the universal ribosomal protein uL24 family. In terms of assembly, part of the 50S ribosomal subunit.

One of two assembly initiator proteins, it binds directly to the 5'-end of the 23S rRNA, where it nucleates assembly of the 50S subunit. In terms of biological role, one of the proteins that surrounds the polypeptide exit tunnel on the outside of the subunit. In Xanthomonas oryzae pv. oryzae (strain MAFF 311018), this protein is Large ribosomal subunit protein uL24.